The sequence spans 385 residues: 1-deoxy-D-xylulose 5-phosphate reductoisomerase (385 aa).

Positions 10, 11, 12, 13, 37, and 124 each coordinate NADPH. A 1-deoxy-D-xylulose 5-phosphate-binding site is contributed by lysine 125. Glutamate 126 contacts NADPH. Residue aspartate 150 participates in Mn(2+) binding. Positions 151, 152, 176, and 199 each coordinate 1-deoxy-D-xylulose 5-phosphate. Glutamate 152 provides a ligand contact to Mn(2+). Glycine 205 serves as a coordination point for NADPH. 1-deoxy-D-xylulose 5-phosphate contacts are provided by serine 212, asparagine 217, lysine 218, and glutamate 221. Residue glutamate 221 coordinates Mn(2+).

Belongs to the DXR family. Mg(2+) is required as a cofactor. The cofactor is Mn(2+).

It catalyses the reaction 2-C-methyl-D-erythritol 4-phosphate + NADP(+) = 1-deoxy-D-xylulose 5-phosphate + NADPH + H(+). The protein operates within isoprenoid biosynthesis; isopentenyl diphosphate biosynthesis via DXP pathway; isopentenyl diphosphate from 1-deoxy-D-xylulose 5-phosphate: step 1/6. In terms of biological role, catalyzes the NADPH-dependent rearrangement and reduction of 1-deoxy-D-xylulose-5-phosphate (DXP) to 2-C-methyl-D-erythritol 4-phosphate (MEP). This Clostridium botulinum (strain Langeland / NCTC 10281 / Type F) protein is 1-deoxy-D-xylulose 5-phosphate reductoisomerase.